Reading from the N-terminus, the 74-residue chain is MSKILTFVKNKIIDLINNDQIKYSRVIMIEESDSLLPVDEVHANHGFDCVEMIDENISNENIEQYKTESFFTIN.

This sequence belongs to the orthopoxvirus OPG050 family.

The protein is Protein OPG050 (OPG050) of Vaccinia virus (strain Ankara) (VACV).